Here is a 198-residue protein sequence, read N- to C-terminus: Type 1 fimbriae regulatory protein FimE (198 aa).

The 183-residue stretch at Ser-2–Glu-184 folds into the Tyr recombinase domain. Active-site residues include Arg-41, Lys-66, His-136, Arg-139, and His-162. Tyr-171 acts as the O-(3'-phospho-DNA)-tyrosine intermediate in catalysis.

It belongs to the 'phage' integrase family.

Its function is as follows. FimE is one of the 2 regulatory proteins which control the phase variation of type 1 fimbriae in E.coli. These proteins mediate the periodic inversion of a 300bp DNA segment that harbors the promoter for the fimbrial structural gene, fimA. FimE switches fimA off. The sequence is that of Type 1 fimbriae regulatory protein FimE (fimE) from Escherichia coli O6:H1 (strain CFT073 / ATCC 700928 / UPEC).